Here is a 162-residue protein sequence, read N- to C-terminus: Phycoerythrocyanin alpha chain (162 aa).

(15Z)-phycoviolobilin is bound at residue C84.

It belongs to the phycobiliprotein family. As to quaternary structure, heterodimer of an alpha and a beta chain. Contains one covalently linked bilin chromophore.

It localises to the cellular thylakoid membrane. In terms of biological role, light-harvesting photosynthetic bile pigment-protein from the phycobiliprotein complex. This Nostoc sp. (strain PCC 7120 / SAG 25.82 / UTEX 2576) protein is Phycoerythrocyanin alpha chain (pecA).